The primary structure comprises 302 residues: N-acetylmuramic acid 6-phosphate etherase (302 aa).

In terms of domain architecture, SIS spans 58 to 221 (IGESFLNGGR…STGAMVKTGK (164 aa)). The active-site Proton donor is Glu86. Glu117 is an active-site residue.

Belongs to the GCKR-like family. MurNAc-6-P etherase subfamily. In terms of assembly, homodimer.

It catalyses the reaction N-acetyl-D-muramate 6-phosphate + H2O = N-acetyl-D-glucosamine 6-phosphate + (R)-lactate. It functions in the pathway amino-sugar metabolism; N-acetylmuramate degradation. Its function is as follows. Specifically catalyzes the cleavage of the D-lactyl ether substituent of MurNAc 6-phosphate, producing GlcNAc 6-phosphate and D-lactate. The sequence is that of N-acetylmuramic acid 6-phosphate etherase from Clostridium botulinum (strain Langeland / NCTC 10281 / Type F).